The chain runs to 558 residues: Dihydroxy-acid dehydratase (558 aa).

Cys50 lines the [2Fe-2S] cluster pocket. A Mg(2+)-binding site is contributed by Asp82. Cys123 contributes to the [2Fe-2S] cluster binding site. Mg(2+)-binding residues include Asp124 and Lys125. N6-carboxylysine is present on Lys125. [2Fe-2S] cluster is bound at residue Cys195. Glu447 contributes to the Mg(2+) binding site. The Proton acceptor role is filled by Ser472.

It belongs to the IlvD/Edd family. In terms of assembly, homodimer. The cofactor is [2Fe-2S] cluster. Requires Mg(2+) as cofactor.

The enzyme catalyses (2R)-2,3-dihydroxy-3-methylbutanoate = 3-methyl-2-oxobutanoate + H2O. It catalyses the reaction (2R,3R)-2,3-dihydroxy-3-methylpentanoate = (S)-3-methyl-2-oxopentanoate + H2O. It participates in amino-acid biosynthesis; L-isoleucine biosynthesis; L-isoleucine from 2-oxobutanoate: step 3/4. The protein operates within amino-acid biosynthesis; L-valine biosynthesis; L-valine from pyruvate: step 3/4. In terms of biological role, functions in the biosynthesis of branched-chain amino acids. Catalyzes the dehydration of (2R,3R)-2,3-dihydroxy-3-methylpentanoate (2,3-dihydroxy-3-methylvalerate) into 2-oxo-3-methylpentanoate (2-oxo-3-methylvalerate) and of (2R)-2,3-dihydroxy-3-methylbutanoate (2,3-dihydroxyisovalerate) into 2-oxo-3-methylbutanoate (2-oxoisovalerate), the penultimate precursor to L-isoleucine and L-valine, respectively. This Saccharolobus islandicus (strain M.16.27) (Sulfolobus islandicus) protein is Dihydroxy-acid dehydratase.